A 612-amino-acid polypeptide reads, in one-letter code: Kelch repeat and BTB domain-containing protein 3 (612 aa).

Residues 52–119 (YDFKIIMKDE…AYTGKTKITD (68 aa)) enclose the BTB domain. The BACK domain occupies 150–250 (NLVNCLQLLS…VRLHQLSEET (101 aa)). Kelch repeat units lie at residues 291 to 337 (STTE…GSSL), 339 to 390 (SYGE…STMK), 400 to 450 (MALD…PEAS), 452 to 502 (CQNV…ATLI), and 548 to 595 (GIED…FYCQ).

The protein is Kelch repeat and BTB domain-containing protein 3 of Pongo abelii (Sumatran orangutan).